Consider the following 61-residue polypeptide: Large ribosomal subunit protein uL30 (61 aa).

Belongs to the universal ribosomal protein uL30 family. Part of the 50S ribosomal subunit.

The polypeptide is Large ribosomal subunit protein uL30 (Caulobacter vibrioides (strain ATCC 19089 / CIP 103742 / CB 15) (Caulobacter crescentus)).